The following is a 408-amino-acid chain: Peptidase T (408 aa).

His-78 contributes to the Zn(2+) binding site. The active site involves Asp-80. Zn(2+) is bound at residue Asp-141. Glu-175 (proton acceptor) is an active-site residue. Zn(2+) contacts are provided by Glu-176, Asp-198, and His-380.

The protein belongs to the peptidase M20B family. Requires Zn(2+) as cofactor.

It localises to the cytoplasm. It carries out the reaction Release of the N-terminal residue from a tripeptide.. Cleaves the N-terminal amino acid of tripeptides. In Clostridium botulinum (strain Loch Maree / Type A3), this protein is Peptidase T.